Reading from the N-terminus, the 275-residue chain is MEFLKHYEDDEDQDDENNTKDENVNKINKRQHFEIENVIDEIPDLPLSFFENFKKIKHYSSEIIDETNKKTRLFEHVEGNYPTFIYFKVPTKSRNDIKELIEQVKEIGNEINIKQDTETCFHISISRTFPIREHHIETFTQELKKTLKNQRSIDIQLSKECCVFINDNQSRIFLSIPINQSFKSNILKLIERIDSCLSLFKFPKYYDNPEPHLSISWSLITNNNNETNDENINYIPLNKFKNKEIIRDNLKLTDSFKVSRIFWNIGKTESFIDLQ.

The interval Met-1–Asn-25 is disordered. His-122 serves as the catalytic Proton acceptor. Residues His-122–Ser-124, Tyr-206, and Asn-208–Ser-214 each bind AMP. Residues Tyr-206 and Glu-210–Ser-214 contribute to the UMP site. The Proton donor role is filled by His-212.

The protein belongs to the 2H phosphoesterase superfamily. USB1 family.

It is found in the nucleus. It carries out the reaction a 3'-end uridylyl-uridine-RNA = a 3'-end 2',3'-cyclophospho-uridine-RNA + uridine. 3'-5' RNA exonuclease that trims the 3' end of oligo(U) tracts of the pre-U6 small nuclear RNA (snRNA) molecule, leading to the formation of a mature U6 snRNA 3' end-terminated with a 2',3'-cyclic phosphate. Participates in the U6 snRNA 3' end processing that prevents U6 snRNA degradation. This Dictyostelium discoideum (Social amoeba) protein is U6 snRNA phosphodiesterase 1.